Reading from the N-terminus, the 934-residue chain is Bifunctional uridylyltransferase/uridylyl-removing enzyme (934 aa).

The tract at residues 1–379 is uridylyltransferase; the sequence is MSAHDLKLEE…TFSRRKRKLS (379 aa). The uridylyl-removing stretch occupies residues 380 to 736; sequence DDGAFISENH…AKPHAFEAVT (357 aa). The 118-residue stretch at 496–613 folds into the HD domain; the sequence is VDEHLLRCIA…IDFADTVQTM (118 aa). ACT domains are found at residues 737-818 and 848-931; these read EITV…DMLA and VIEV…RSPQ.

Belongs to the GlnD family. It depends on Mg(2+) as a cofactor.

The enzyme catalyses [protein-PII]-L-tyrosine + UTP = [protein-PII]-uridylyl-L-tyrosine + diphosphate. It catalyses the reaction [protein-PII]-uridylyl-L-tyrosine + H2O = [protein-PII]-L-tyrosine + UMP + H(+). Uridylyltransferase (UTase) activity is inhibited by glutamine, while glutamine activates uridylyl-removing (UR) activity. In terms of biological role, modifies, by uridylylation and deuridylylation, the PII regulatory proteins (GlnB and homologs), in response to the nitrogen status of the cell that GlnD senses through the glutamine level. Under low glutamine levels, catalyzes the conversion of the PII proteins and UTP to PII-UMP and PPi, while under higher glutamine levels, GlnD hydrolyzes PII-UMP to PII and UMP (deuridylylation). Thus, controls uridylylation state and activity of the PII proteins, and plays an important role in the regulation of nitrogen assimilation and metabolism. This is Bifunctional uridylyltransferase/uridylyl-removing enzyme from Brucella melitensis biotype 2 (strain ATCC 23457).